We begin with the raw amino-acid sequence, 570 residues long: Sulfite reductase [NADPH] hemoprotein beta-component (570 aa).

[4Fe-4S] cluster is bound by residues cysteine 434, cysteine 440, cysteine 479, and cysteine 483. Cysteine 483 is a binding site for siroheme.

Belongs to the nitrite and sulfite reductase 4Fe-4S domain family. Alpha(8)-beta(8). The alpha component is a flavoprotein, the beta component is a hemoprotein. It depends on siroheme as a cofactor. [4Fe-4S] cluster is required as a cofactor.

It carries out the reaction hydrogen sulfide + 3 NADP(+) + 3 H2O = sulfite + 3 NADPH + 4 H(+). The protein operates within sulfur metabolism; hydrogen sulfide biosynthesis; hydrogen sulfide from sulfite (NADPH route): step 1/1. Component of the sulfite reductase complex that catalyzes the 6-electron reduction of sulfite to sulfide. This is one of several activities required for the biosynthesis of L-cysteine from sulfate. This is Sulfite reductase [NADPH] hemoprotein beta-component from Escherichia coli (strain SMS-3-5 / SECEC).